A 276-amino-acid polypeptide reads, in one-letter code: MKTGMFTCGHQRLPIEHAFRDASELGYDGIEIWGGRPHAFAPDLKAGGIKQIKALAQTYQMPIIGYTPETNGYPYNMMLGDEHMRRESLDMIKLAIDMAKEMNAGYTLISAAHAGYLTPPNVIWGRLAENLSELCEYAENIGMDLILEPLTPYESNVVCNANDVLHALALVPSPRLFSMVDICAPYVQAEPVMSYFDKLGDKLRHLHIVDSDGASDTHYIPGEGKMPLRELMRDIIDRGYEGYSTVELVTMYMNEPRLYARQALERFRALLPEDER.

The Proton donor/acceptor role is filled by E148. The a divalent metal cation site is built by E148, D181, H207, and E247. E247 functions as the Proton donor/acceptor in the catalytic mechanism.

Belongs to the FrlC family. In terms of assembly, homooctamer. A divalent metal cation is required as a cofactor.

It catalyses the reaction N(6)-(D-psicosyl)-L-lysine = N(6)-(D-fructosyl)-L-lysine. Catalyzes the reversible interconversion of fructoselysine with its C-3 epimer, psicoselysine. May allow S.flexneri to utilize psicoselysine for growth. The protein is Fructoselysine 3-epimerase (frlC) of Shigella flexneri.